The sequence spans 168 residues: Photosystem I assembly protein Ycf3 (168 aa).

TPR repeat units lie at residues 35–68 (AFTY…EIDP), 72–105 (SYIL…NPFL), and 120–153 (GEQA…TPGN).

The protein belongs to the Ycf3 family.

It is found in the plastid membrane. Its function is as follows. Essential for the assembly of the photosystem I (PSI) complex. May act as a chaperone-like factor to guide the assembly of the PSI subunits. This is Photosystem I assembly protein Ycf3 from Cuscuta reflexa (Southern Asian dodder).